The chain runs to 1120 residues: Transcription-repair-coupling factor (1120 aa).

Residues 591-756 (DLTNGMLMDR…LTGLKELSII (166 aa)) enclose the Helicase ATP-binding domain. 604 to 611 (GDVGFGKT) contacts ATP. The DEEQ box signature appears at 709–712 (DEEQ). The region spanning 777–933 (IIRDALLREH…TIASHDADLR (157 aa)) is the Helicase C-terminal domain.

This sequence in the N-terminal section; belongs to the UvrB family. It in the C-terminal section; belongs to the helicase family. RecG subfamily.

It localises to the cytoplasm. Functionally, couples transcription and DNA repair by recognizing RNA polymerase (RNAP) stalled at DNA lesions. Mediates ATP-dependent release of RNAP and its truncated transcript from the DNA, and recruitment of nucleotide excision repair machinery to the damaged site. The protein is Transcription-repair-coupling factor of Rickettsia typhi (strain ATCC VR-144 / Wilmington).